The primary structure comprises 172 residues: Shikimate kinase (172 aa).

12-17 (GSGKTS) is an ATP binding site. Position 16 (Thr16) interacts with Mg(2+). Substrate-binding residues include Asp34, Arg58, and Gly81. Arg122 is an ATP binding site. Substrate is bound at residue Arg139.

This sequence belongs to the shikimate kinase family. In terms of assembly, monomer. It depends on Mg(2+) as a cofactor.

Its subcellular location is the cytoplasm. The enzyme catalyses shikimate + ATP = 3-phosphoshikimate + ADP + H(+). It functions in the pathway metabolic intermediate biosynthesis; chorismate biosynthesis; chorismate from D-erythrose 4-phosphate and phosphoenolpyruvate: step 5/7. In terms of biological role, catalyzes the specific phosphorylation of the 3-hydroxyl group of shikimic acid using ATP as a cosubstrate. This chain is Shikimate kinase, found in Dictyoglomus turgidum (strain DSM 6724 / Z-1310).